The following is a 507-amino-acid chain: MNEHMDHFYTKRKQAEEGGGREKLAQQRQKGKLTARERIIFLLDQDSFIELHPFMESQVLTREQRMLGDGVVTGYGTIDGRSVYVFAQDFTVYGGALGETHARKICALMDLAAKNKAPIIGLNDSGGARIQEGVLSLDGYGHIFYRNVLYSGVIPQISVILGPCAGGAVYSPALTDFIFMAEQTGRMFITGPKVIEKVTGEQVDAESLGGAGIHNAVSGNAHFSGHTEKEVLTGVRKLLSYLPLNGRTTEPKPEKEASRPLLNRLVPADTTKPYDVRKVIRELADPQSFFEIQPFFAKNIVIGFARLGEKAIGIVASQPKHLAGSLTIDAADKAARFIRFCDAFDIPLLTVEDVPGFLPGIQQEHNGIIRHGAKLLFAYAEATVPKVTLIIRKAYGGAYVAMNSKAIGADLVFAWPNAEIAVMGPEGAASILYEKEIKASADPQKTKREKTAEYKKQNAGPYKAAACGMVDDIILPEESRGRLIQAFHMLTHKTEERPKKKHGNIPL.

Over residues 1 to 25 (MNEHMDHFYTKRKQAEEGGGREKLA) the composition is skewed to basic and acidic residues. The tract at residues 1-30 (MNEHMDHFYTKRKQAEEGGGREKLAQQRQK) is disordered. A CoA carboxyltransferase N-terminal domain is found at 1–254 (MNEHMDHFYT…NGRTTEPKPE (254 aa)). Positions 1-501 (MNEHMDHFYT…HKTEERPKKK (501 aa)) are carboxyltransferase. The CoA carboxyltransferase C-terminal domain maps to 256–501 (EASRPLLNRL…HKTEERPKKK (246 aa)).

This sequence belongs to the AccD/PCCB family. As to quaternary structure, probably a dodecamer composed of six biotin-containing alpha subunits and six beta subunits.

The enzyme catalyses propanoyl-CoA + hydrogencarbonate + ATP = (S)-methylmalonyl-CoA + ADP + phosphate + H(+). The protein operates within metabolic intermediate metabolism; propanoyl-CoA degradation; succinyl-CoA from propanoyl-CoA: step 1/3. This chain is Putative propionyl-CoA carboxylase beta chain (yqjD), found in Bacillus subtilis (strain 168).